The primary structure comprises 87 residues: uncharacterized protein (87 aa).

To A.fulgidus AF_1348 and AF_1363.

This is an uncharacterized protein from Archaeoglobus fulgidus (strain ATCC 49558 / DSM 4304 / JCM 9628 / NBRC 100126 / VC-16).